Here is a 115-residue protein sequence, read N- to C-terminus: Large ribosomal subunit protein bL20c (115 aa).

It belongs to the bacterial ribosomal protein bL20 family.

Its subcellular location is the plastid. The protein resides in the chloroplast. In terms of biological role, binds directly to 23S ribosomal RNA and is necessary for the in vitro assembly process of the 50S ribosomal subunit. It is not involved in the protein synthesizing functions of that subunit. This Angiopteris evecta (Mule's foot fern) protein is Large ribosomal subunit protein bL20c.